A 608-amino-acid polypeptide reads, in one-letter code: Glutamine--fructose-6-phosphate aminotransferase [isomerizing] (608 aa).

The active-site Nucleophile; for GATase activity is Cys2. Positions 2-217 constitute a Glutamine amidotransferase type-2 domain; the sequence is CGIVGYIGDK…DHEIAIIKKD (216 aa). SIS domains follow at residues 285-424 and 453-598; these read TKED…KKGT and VIQK…VDKP. Lys603 serves as the catalytic For Fru-6P isomerization activity.

Homodimer.

It localises to the cytoplasm. It catalyses the reaction D-fructose 6-phosphate + L-glutamine = D-glucosamine 6-phosphate + L-glutamate. Its function is as follows. Catalyzes the first step in hexosamine metabolism, converting fructose-6P into glucosamine-6P using glutamine as a nitrogen source. The sequence is that of Glutamine--fructose-6-phosphate aminotransferase [isomerizing] from Caldanaerobacter subterraneus subsp. tengcongensis (strain DSM 15242 / JCM 11007 / NBRC 100824 / MB4) (Thermoanaerobacter tengcongensis).